The sequence spans 287 residues: METMRDIKRRINSIKNTQKITKAMKMVAAAKLKKAQLKAENARPFFEKTRSILIDVARRTRQKDIHPLLREKENNRSLFVMITADRGLCGAYNARVIDRVKKLTEKEDEVNFLAVGRKGRDFFGKRGYNIISEYINIDDYPDYSLAGKIGEEIISLFLDDVVDRVVLVYTYFNSAISQEVRDLTLLPLTPPDDKNQEEGKINTEYLYEPSPEAVMDILLPSYIKNILYSALIEAKASEFGARMTAMDAATDNAGELIDKLTLSYNRARQAAITKEITEIVGGAEALK.

It belongs to the ATPase gamma chain family. F-type ATPases have 2 components, CF(1) - the catalytic core - and CF(0) - the membrane proton channel. CF(1) has five subunits: alpha(3), beta(3), gamma(1), delta(1), epsilon(1). CF(0) has three main subunits: a, b and c.

It is found in the cell membrane. Produces ATP from ADP in the presence of a proton gradient across the membrane. The gamma chain is believed to be important in regulating ATPase activity and the flow of protons through the CF(0) complex. This Halothermothrix orenii (strain H 168 / OCM 544 / DSM 9562) protein is ATP synthase gamma chain.